Reading from the N-terminus, the 297-residue chain is Mitochondrial thiamine pyrophosphate carrier 1 (297 aa).

Solcar repeat units follow at residues 13–94 (SHVF…TNAA), 102–195 (PPTI…IRAR), and 196–295 (WPET…LMRV). 6 helical membrane-spanning segments follow: residues 19–36 (LVSGAIAGLAARSAIAPL), 75–91 (IMYIIYGSVQFGTYSYT), 109–128 (LAGAITGMASSLCSYPFDVL), 163–187 (GLGGFFHGVATSMANVTVSTAAMFG), 203–219 (TAGAISGVISRTITFPL), and 270–287 (GIGLGLLKSVPNTAINLW).

It belongs to the mitochondrial carrier (TC 2.A.29) family.

It localises to the mitochondrion inner membrane. Its function is as follows. Mitochondrial transporter that mediates uptake of thiamine pyrophosphate (ThPP) into mitochondria. The protein is Mitochondrial thiamine pyrophosphate carrier 1 (TPC1) of Vanderwaltozyma polyspora (strain ATCC 22028 / DSM 70294 / BCRC 21397 / CBS 2163 / NBRC 10782 / NRRL Y-8283 / UCD 57-17) (Kluyveromyces polysporus).